A 389-amino-acid polypeptide reads, in one-letter code: Mannuronan synthase (389 aa).

The PilZ domain maps to 16 to 116 (QRQFARVKLP…EVAALRYLIT (101 aa)).

It belongs to the Alg44 family.

The protein localises to the periplasm. The catalysed reaction is [(1-&gt;4)-beta-D-mannuronosyl](n) + GDP-alpha-D-mannuronate = [(1-&gt;4)-beta-D-mannuronosyl](n+1) + GDP + H(+). The protein operates within glycan biosynthesis; alginate biosynthesis. Required for alginate biosynthesis. This Pseudomonas aeruginosa (strain ATCC 15692 / DSM 22644 / CIP 104116 / JCM 14847 / LMG 12228 / 1C / PRS 101 / PAO1) protein is Mannuronan synthase (alg44).